Consider the following 1081-residue polypeptide: Carbamoyl phosphate synthase large chain (1081 aa).

Positions 1–410 are carboxyphosphate synthetic domain; it reads MPKRTDIKTI…SFQKALRGLE (410 aa). ATP-binding residues include Arg-129, Arg-176, Gly-182, Gly-183, Glu-215, Leu-217, Glu-222, Gly-248, Ile-249, His-250, Gln-292, and Glu-306. The ATP-grasp 1 domain occupies 133–335; that stretch reads KEAMTKIGLG…IAKVAAKLAV (203 aa). Positions 292, 306, and 308 each coordinate Mg(2+). Residues Gln-292, Glu-306, and Asn-308 each coordinate Mn(2+). The interval 411–558 is oligomerization domain; that stretch reads VGVDGLDEKS…YEAEHGECEA (148 aa). The interval 559–944 is carbamoyl phosphate synthetic domain; that stretch reads DPTERKKIMV…ALFKSQLAAG (386 aa). One can recognise an ATP-grasp 2 domain in the interval 683–878; the sequence is QKLLHDLGLR…LAKVAARCMA (196 aa). Positions 719, 758, 760, 765, 790, 791, 792, 793, 833, and 849 each coordinate ATP. The Mg(2+) site is built by Gln-833, Glu-849, and Asn-851. Mn(2+) contacts are provided by Gln-833, Glu-849, and Asn-851. The MGS-like domain occupies 945–1081; sequence SRLPEKGTVL…YDLQGLHASL (137 aa). Positions 945-1081 are allosteric domain; it reads SRLPEKGTVL…YDLQGLHASL (137 aa).

The protein belongs to the CarB family. Composed of two chains; the small (or glutamine) chain promotes the hydrolysis of glutamine to ammonia, which is used by the large (or ammonia) chain to synthesize carbamoyl phosphate. Tetramer of heterodimers (alpha,beta)4. Mg(2+) serves as cofactor. The cofactor is Mn(2+).

It carries out the reaction hydrogencarbonate + L-glutamine + 2 ATP + H2O = carbamoyl phosphate + L-glutamate + 2 ADP + phosphate + 2 H(+). The catalysed reaction is hydrogencarbonate + NH4(+) + 2 ATP = carbamoyl phosphate + 2 ADP + phosphate + 2 H(+). It functions in the pathway amino-acid biosynthesis; L-arginine biosynthesis; carbamoyl phosphate from bicarbonate: step 1/1. Its pathway is pyrimidine metabolism; UMP biosynthesis via de novo pathway; (S)-dihydroorotate from bicarbonate: step 1/3. Functionally, large subunit of the glutamine-dependent carbamoyl phosphate synthetase (CPSase). CPSase catalyzes the formation of carbamoyl phosphate from the ammonia moiety of glutamine, carbonate, and phosphate donated by ATP, constituting the first step of 2 biosynthetic pathways, one leading to arginine and/or urea and the other to pyrimidine nucleotides. The large subunit (synthetase) binds the substrates ammonia (free or transferred from glutamine from the small subunit), hydrogencarbonate and ATP and carries out an ATP-coupled ligase reaction, activating hydrogencarbonate by forming carboxy phosphate which reacts with ammonia to form carbamoyl phosphate. This Ralstonia nicotianae (strain ATCC BAA-1114 / GMI1000) (Ralstonia solanacearum) protein is Carbamoyl phosphate synthase large chain.